The chain runs to 590 residues: Rho GTPase-activating protein 36 (590 aa).

Positions 214-414 constitute a Rho-GAP domain; that stretch reads MSLNPIAQQI…AMIDNWDILF (201 aa). The tract at residues 526–590 is disordered; that stretch reads IPNNEDTDSD…KGKFATRFFP (65 aa).

As to quaternary structure, may interacts (via the Rho-GAP domain) with the active form of RAC1.

GTPase activator for the Rho-type GTPases by converting them to an inactive GDP-bound state. The sequence is that of Rho GTPase-activating protein 36 (Arhgap36) from Mus musculus (Mouse).